A 663-amino-acid chain; its full sequence is Bicarbonate transport ATP-binding protein CmpC (663 aa).

The region spanning 5–239 (VAVENIEKSF…RPRKRMDVVH (235 aa)) is the ABC transporter domain. 42 to 49 (GHSGCGKS) serves as a coordination point for ATP. The interval 281–663 (LEIGYVPLMA…LDQPRPIAAA (383 aa)) is cmpA-like.

It belongs to the ABC transporter superfamily. Nitrate/nitrite/cyanate uptake transporter (NitT) (TC 3.A.1.16) family. The complex is composed of two ATP-binding proteins (CmpC and CmpD), a transmembrane protein (CmpB) and a solute-binding protein (CmpA).

It is found in the cell inner membrane. Part of the ABC transporter complex CmpABCD involved in bicarbonate transport. Responsible for energy coupling to the transport system. The sequence is that of Bicarbonate transport ATP-binding protein CmpC (cmpC) from Synechococcus elongatus (strain ATCC 33912 / PCC 7942 / FACHB-805) (Anacystis nidulans R2).